A 219-amino-acid polypeptide reads, in one-letter code: Ribose-5-phosphate isomerase A (219 aa).

Substrate is bound by residues Thr-28–Thr-31, Asp-81–Asp-84, and Lys-94–Gly-97. The Proton acceptor role is filled by Glu-103. Lys-121 is a substrate binding site.

It belongs to the ribose 5-phosphate isomerase family. In terms of assembly, homodimer.

It catalyses the reaction aldehydo-D-ribose 5-phosphate = D-ribulose 5-phosphate. Its pathway is carbohydrate degradation; pentose phosphate pathway; D-ribose 5-phosphate from D-ribulose 5-phosphate (non-oxidative stage): step 1/1. In terms of biological role, catalyzes the reversible conversion of ribose-5-phosphate to ribulose 5-phosphate. This chain is Ribose-5-phosphate isomerase A, found in Shewanella frigidimarina (strain NCIMB 400).